Here is a 449-residue protein sequence, read N- to C-terminus: C4-dicarboxylate transport protein (449 aa).

A run of 8 helical transmembrane segments spans residues 18–38 (PFYL…ALLG), 61–81 (MIIS…VAHV), 93–113 (VYFL…AHVV), 159–179 (FVGD…IALA), 202–222 (LVQM…AFTI), 244–264 (SLLF…FSIL), 346–366 (LFLV…AGFI), and 369–389 (AATL…ILGV).

Belongs to the dicarboxylate/amino acid:cation symporter (DAACS) (TC 2.A.23) family.

It localises to the cell inner membrane. Functionally, responsible for the transport of dicarboxylates such as succinate, fumarate, and malate from the periplasm across the membrane. The sequence is that of C4-dicarboxylate transport protein from Xylella fastidiosa (strain M23).